Here is a 719-residue protein sequence, read N- to C-terminus: Leucine-rich repeat and fibronectin type-III domain-containing protein 5 (719 aa).

An N-terminal signal peptide occupies residues 1–17 (MEKILFYLFLIGIAVKA). In terms of domain architecture, LRRNT spans 18–51 (QICPKRCVCQILSPNLATLCAKKGLLFVPPNIDR). At 18 to 529 (QICPKRCVCQ…MQSQFLGGTM (512 aa)) the chain is on the extracellular side. LRR repeat units follow at residues 52-73 (RTVE…DFAN), 76-97 (SLVD…AFAD), 100-121 (NLRA…MFSG), 124-145 (NLHH…AFDD), 148-169 (ALEE…AVEK), 172-193 (SLHT…TFSH), and 196-217 (KMTR…PLFQ). N-linked (GlcNAc...) asparagine glycosylation is present at Asn-73. In terms of domain architecture, LRRCT spans 240–286 (NPLHCNCELLWLRRLSREDDLETCASPPLLTGRYFWSIPEEEFLCEP). One can recognise an Ig-like domain in the interval 287–373 (PLITRHTHEM…GEATQIVDLH (87 aa)). Cys-308 and Cys-357 form a disulfide bridge. 5 N-linked (GlcNAc...) asparagine glycosylation sites follow: Asn-330, Asn-339, Asn-382, Asn-406, and Asn-452. The disordered stretch occupies residues 385–414 (NHIHEPDPGSSDISTSTKSGSNTSSSNGDT). Low complexity predominate over residues 393 to 414 (GSSDISTSTKSGSNTSSSNGDT). In terms of domain architecture, Fibronectin type-III spans 414–503 (TKLSQDKIVV…ITSLTATRVV (90 aa)). The chain crosses the membrane as a helical span at residues 530-550 (IIIIGGIIVASVLVFIIILMI). At 551 to 719 (RYKVCNNNGQ…VQETQRLELI (169 aa)) the chain is on the cytoplasmic side. Residues 615 to 627 (ETCSSQDSSTTTS) are compositionally biased toward low complexity. A disordered region spans residues 615–694 (ETCSSQDSST…SVTEGPTSKR (80 aa)). Composition is skewed to polar residues over residues 628–641 (ALPP…SVSQ) and 649–677 (TKPS…TALQ).

This sequence belongs to the LRFN family. As to quaternary structure, can form heteromeric complexes with LRFN1, LRFN2, LRFN3 and LFRN4. Able to form homomeric complexes across cell junctions, between adjacent cells. Does not interact with DLG1, DLG2, DLG3 and DLG4.

It is found in the membrane. Functionally, cell adhesion molecule that mediates homophilic cell-cell adhesion in a Ca(2+)-independent manner. Promotes neurite outgrowth in hippocampal neurons. The polypeptide is Leucine-rich repeat and fibronectin type-III domain-containing protein 5 (LRFN5) (Homo sapiens (Human)).